The chain runs to 315 residues: Homoserine kinase (315 aa).

Position 97-107 (97-107 (PPARGLGSSAT)) interacts with ATP.

This sequence belongs to the GHMP kinase family. Homoserine kinase subfamily.

The protein resides in the cytoplasm. The enzyme catalyses L-homoserine + ATP = O-phospho-L-homoserine + ADP + H(+). Its pathway is amino-acid biosynthesis; L-threonine biosynthesis; L-threonine from L-aspartate: step 4/5. Functionally, catalyzes the ATP-dependent phosphorylation of L-homoserine to L-homoserine phosphate. This chain is Homoserine kinase, found in Prochlorococcus marinus (strain MIT 9312).